The chain runs to 695 residues: MADIKTGIFAKNVQKRLNRAQEKVLQKLGKADETKDEQFEEYVQNFKRQEAEGTRLQRELRGYLAAIKGMQEASMKLTESLHEVYEPDWYGREDVKMVGEKCDVLWEDFHQKLVDGSLLTLDTYLGQFPDIKNRIAKRSRKLVDYDSARHHLEALQSSKRKDESRISKAEEEFQKAQKVFEEFNVDLQEELPSLWSRRVGFYVNTFKNVSSLEAKFHKEIAVLCHKLYEVMTKLGDQHADKAFTIQGAPSDSGPLRIAKTPSPPEEPSPLPSPTASPNHTLAPASPAPARPRSPSQTRKGPPVPPLPKVTPTKELQQENIISFFEDNFVPEISVTTPSQNEVPEVKKEETLLDLDFDPFKPEVTPAGSAGVTHSPMSQTLPWDLWTTSTDLVQPASGGSFNGFTQPQDTSLFTMQTDQSMICNLAESEQAPPTEPKAEEPLAAVTPAVGLDLGMDTRAEEPVEEAVIIPGADADAAVGTLVSAAEGAPGEEAEAEKATVPAGEGVSLEEAKIGTETTEGAESAQPEAEELEATVPQEKVIPSVVIEPASNHEEEGENEITIGAEPKETTEDAAPPGPTSETPELATEQKPIQDPQPTPSAPAMGAADQLASAREASQELPPGFLYKVETLHDFEAANSDELTLQRGDVVLVVPSDSEADQDAGWLVGVKESDWLQYRDLATYKGLFPENFTRRLD.

2 coiled-coil regions span residues 10–83 (AKNV…SLHE) and 144–191 (DYDS…QEEL). The BAR domain maps to 24–240 (VLQKLGKADE…MTKLGDQHAD (217 aa)). Disordered stretches follow at residues 244–312 (TIQG…VTPT) and 486–617 (GAPG…EASQ). Serine 252 is subject to Phosphoserine. Phosphothreonine is present on threonine 260. The span at 261–274 (PSPPEEPSPLPSPT) shows a compositional bias: pro residues. A phosphoserine mark is found at serine 262, serine 268, serine 272, and serine 276. Threonine 280 bears the Phosphothreonine mark. Phosphoserine is present on residues serine 506 and serine 638. The 74-residue stretch at 622–695 (GFLYKVETLH…FPENFTRRLD (74 aa)) folds into the SH3 domain.

Heterodimer with BIN1. Binds SH3GLB1. Interacts with REPS1 and SGIP1. Binds AP2A2. Interacts with AP2B1. Interacts with DNM1 and SYNJ1. Neurons, certain endocrine cell types and spermatocytes.

Its subcellular location is the cytoplasmic vesicle. The protein localises to the secretory vesicle. The protein resides in the synaptic vesicle membrane. It localises to the cytoplasm. It is found in the cytoskeleton. Functionally, may participate in mechanisms of regulated exocytosis in synapses and certain endocrine cell types. May control the properties of the membrane associated cytoskeleton. This Homo sapiens (Human) protein is Amphiphysin (AMPH).